Reading from the N-terminus, the 61-residue chain is MGLSGISPLSLLLILAIIVALFGTSKLKTIGSDLGEAIKNFRKAMNSEETNDTQKDDHKPL.

The chain crosses the membrane as a helical span at residues 2–22 (GLSGISPLSLLLILAIIVALF).

Belongs to the TatA/E family. The Tat system comprises two distinct complexes: a TatABC complex, containing multiple copies of TatA, TatB and TatC subunits, and a separate TatA complex, containing only TatA subunits. Substrates initially bind to the TatABC complex, which probably triggers association of the separate TatA complex to form the active translocon.

The protein resides in the cell inner membrane. Part of the twin-arginine translocation (Tat) system that transports large folded proteins containing a characteristic twin-arginine motif in their signal peptide across membranes. TatA could form the protein-conducting channel of the Tat system. The protein is Sec-independent protein translocase protein TatA of Legionella pneumophila (strain Corby).